We begin with the raw amino-acid sequence, 200 residues long: 3-isopropylmalate dehydratase small subunit (200 aa).

The protein belongs to the LeuD family. LeuD type 1 subfamily. As to quaternary structure, heterodimer of LeuC and LeuD.

The catalysed reaction is (2R,3S)-3-isopropylmalate = (2S)-2-isopropylmalate. It participates in amino-acid biosynthesis; L-leucine biosynthesis; L-leucine from 3-methyl-2-oxobutanoate: step 2/4. Catalyzes the isomerization between 2-isopropylmalate and 3-isopropylmalate, via the formation of 2-isopropylmaleate. The sequence is that of 3-isopropylmalate dehydratase small subunit from Photobacterium profundum (strain SS9).